A 297-amino-acid chain; its full sequence is Acetyl-coenzyme A carboxylase carboxyl transferase subunit beta (297 aa).

Residues 27 to 296 enclose the CoA carboxyltransferase N-terminal domain; the sequence is LWHKCPSCEA…PVETSQVTAK (270 aa). Positions 31, 34, 50, and 53 each coordinate Zn(2+). The C4-type zinc finger occupies 31–53; that stretch reads CPSCEAVLYRPELEKTLDVCPKC.

It belongs to the AccD/PCCB family. As to quaternary structure, acetyl-CoA carboxylase is a heterohexamer composed of biotin carboxyl carrier protein (AccB), biotin carboxylase (AccC) and two subunits each of ACCase subunit alpha (AccA) and ACCase subunit beta (AccD). Zn(2+) is required as a cofactor.

It localises to the cytoplasm. The catalysed reaction is N(6)-carboxybiotinyl-L-lysyl-[protein] + acetyl-CoA = N(6)-biotinyl-L-lysyl-[protein] + malonyl-CoA. The protein operates within lipid metabolism; malonyl-CoA biosynthesis; malonyl-CoA from acetyl-CoA: step 1/1. Component of the acetyl coenzyme A carboxylase (ACC) complex. Biotin carboxylase (BC) catalyzes the carboxylation of biotin on its carrier protein (BCCP) and then the CO(2) group is transferred by the transcarboxylase to acetyl-CoA to form malonyl-CoA. The chain is Acetyl-coenzyme A carboxylase carboxyl transferase subunit beta from Stutzerimonas stutzeri (strain A1501) (Pseudomonas stutzeri).